Consider the following 702-residue polypeptide: ATP-dependent RNA helicase DDX4 (702 aa).

The interval F22 to E228 is disordered. Residues S29–G46 show a composition bias toward polar residues. Composition is skewed to gly residues over residues G58–N68 and R125–L137. Polar residues-rich tracts occupy residues N141–T150 and S195–P215. Phosphoserine occurs at positions 195 and 199. The interaction with RANBP9 stretch occupies residues K201–I220. Residues L261–K289 carry the Q motif motif. The region spanning I292–F475 is the Helicase ATP-binding domain. A305 to T312 contributes to the ATP binding site. Residues D419–D422 carry the DEAD box motif. The Helicase C-terminal domain occupies K503–A648. The span at T681 to P693 shows a compositional bias: polar residues. A disordered region spans residues T681–D702. A Phosphoserine modification is found at S700.

Belongs to the DEAD box helicase family. DDX4/VASA subfamily. Found in a mRNP complex, at least composed of TDRD1, TDRD6, TDRD7 and DDX4. Interacts with RANBP9. Interacts with RANBP10. Interacts with PIWIL2 and MAEL. Interacts with BMAL1 and CLOCK. Interacts with Tex19.1 and, probably, Tex19.2. Interacts with RBM46. As to expression, testis-specific.

It localises to the cytoplasm. It is found in the perinuclear region. The catalysed reaction is ATP + H2O = ADP + phosphate + H(+). Its function is as follows. ATP-dependent RNA helicase required during spermatogenesis to repress transposable elements and preventing their mobilization, which is essential for the germline integrity. Acts via the piRNA metabolic process, which mediates the repression of transposable elements during meiosis by forming complexes composed of piRNAs and Piwi proteins and governs the methylation and subsequent repression of transposons. Involved in the secondary piRNAs metabolic process, the production of piRNAs in fetal male germ cells through a ping-pong amplification cycle. Required for PIWIL2 slicing-triggered piRNA biogenesis: helicase activity enables utilization of one of the slice cleavage fragments generated by PIWIL2 and processing these pre-piRNAs into piRNAs. The chain is ATP-dependent RNA helicase DDX4 from Mus musculus (Mouse).